Consider the following 461-residue polypeptide: tRNA modification GTPase MnmE (461 aa).

(6S)-5-formyl-5,6,7,8-tetrahydrofolate contacts are provided by Arg-23, Glu-88, and Arg-127. A TrmE-type G domain is found at 223–383 (GLNTVIVGKP…LKECIKNLFF (161 aa)). Residue Asn-233 coordinates K(+). GTP is bound by residues 233-238 (NVGKSS), 252-258 (TEIPGTT), and 277-280 (DTAG). A Mg(2+)-binding site is contributed by Ser-237. K(+)-binding residues include Thr-252, Ile-254, and Thr-257. Residue Thr-258 coordinates Mg(2+). Lys-461 is a binding site for (6S)-5-formyl-5,6,7,8-tetrahydrofolate.

It belongs to the TRAFAC class TrmE-Era-EngA-EngB-Septin-like GTPase superfamily. TrmE GTPase family. As to quaternary structure, homodimer. Heterotetramer of two MnmE and two MnmG subunits. K(+) is required as a cofactor.

The protein localises to the cytoplasm. Exhibits a very high intrinsic GTPase hydrolysis rate. Involved in the addition of a carboxymethylaminomethyl (cmnm) group at the wobble position (U34) of certain tRNAs, forming tRNA-cmnm(5)s(2)U34. In Clostridium botulinum (strain Loch Maree / Type A3), this protein is tRNA modification GTPase MnmE.